Consider the following 123-residue polypeptide: Small ribosomal subunit protein uS13 (123 aa).

A disordered region spans residues 94–123 (RRGLPVRGQHTKNNARTRKGPARAIAGKKK).

Belongs to the universal ribosomal protein uS13 family. As to quaternary structure, part of the 30S ribosomal subunit. Forms a loose heterodimer with protein S19. Forms two bridges to the 50S subunit in the 70S ribosome.

Located at the top of the head of the 30S subunit, it contacts several helices of the 16S rRNA. In the 70S ribosome it contacts the 23S rRNA (bridge B1a) and protein L5 of the 50S subunit (bridge B1b), connecting the 2 subunits; these bridges are implicated in subunit movement. Contacts the tRNAs in the A and P-sites. This chain is Small ribosomal subunit protein uS13, found in Oenococcus oeni (strain ATCC BAA-331 / PSU-1).